We begin with the raw amino-acid sequence, 142 residues long: Hemoglobin subunit alpha-4 (142 aa).

Residue Ser1 is modified to N-acetylserine. Residues Ser1–Arg142 form the Globin domain. Residue His59 coordinates O2. His88 contributes to the heme b binding site.

This sequence belongs to the globin family. Heterotetramer of two alpha chains and two beta chains. In terms of tissue distribution, red blood cells.

In terms of biological role, involved in oxygen transport from gills to the various peripheral tissues. This Oncorhynchus mykiss (Rainbow trout) protein is Hemoglobin subunit alpha-4 (hba4).